A 459-amino-acid polypeptide reads, in one-letter code: Sulfite oxidase (459 aa).

The Cytochrome b5 heme-binding domain occupies 4–83; that stretch reads YPRYTREEVG…LQQYKVGELS (80 aa). Residues His40, His65, and His69 each coordinate heme b. Positions 83 to 115 are disordered; it reads SPDEAPAAPDAQDPFAGDPPRHPGLRVNSQKPF. Low complexity predominate over residues 85-100; the sequence is DEAPAAPDAQDPFAGD. The interval 86–95 is hinge; that stretch reads EAPAAPDAQD. The tract at residues 96–323 is moco domain; sequence PFAGDPPRHP…PSRWQQNDYK (228 aa). Mo-molybdopterin-binding positions include 136–140, Cys185, Asp244, His283, Arg288, and 299–301; these read FTRNH and SVK. A homodimerization region spans residues 324 to 459; sequence GFSPCVDWDT…RGVLSTAWHR (136 aa).

As to quaternary structure, homodimer. It depends on heme b as a cofactor. Requires Mo-molybdopterin as cofactor.

It localises to the mitochondrion intermembrane space. The catalysed reaction is sulfite + O2 + H2O = sulfate + H2O2. The protein operates within energy metabolism; sulfur metabolism. Functionally, catalyzes the oxidation of sulfite to sulfate, the terminal reaction in the oxidative degradation of sulfur-containing amino acids. The protein is Sulfite oxidase (SUOX) of Gallus gallus (Chicken).